The sequence spans 72 residues: Translation initiation factor IF-1 (72 aa).

Residues 2–72 form the S1-like domain; it reads AKDDVIEVEG…TRGRITYRYK (71 aa). Phosphotyrosine is present on tyrosine 60.

It belongs to the IF-1 family. Component of the 30S ribosomal translation pre-initiation complex which assembles on the 30S ribosome in the order IF-2 and IF-3, IF-1 and N-formylmethionyl-tRNA(fMet); mRNA recruitment can occur at any time during PIC assembly.

The protein localises to the cytoplasm. One of the essential components for the initiation of protein synthesis. Stabilizes the binding of IF-2 and IF-3 on the 30S subunit to which N-formylmethionyl-tRNA(fMet) subsequently binds. Helps modulate mRNA selection, yielding the 30S pre-initiation complex (PIC). Upon addition of the 50S ribosomal subunit IF-1, IF-2 and IF-3 are released leaving the mature 70S translation initiation complex. The protein is Translation initiation factor IF-1 of Bacillus subtilis (strain 168).